Reading from the N-terminus, the 243-residue chain is NAD(P)H-quinone oxidoreductase subunit K (243 aa).

Cys-59, Cys-60, Cys-124, and Cys-155 together coordinate [4Fe-4S] cluster.

The protein belongs to the complex I 20 kDa subunit family. In terms of assembly, NDH-1 can be composed of about 15 different subunits; different subcomplexes with different compositions have been identified which probably have different functions. Requires [4Fe-4S] cluster as cofactor.

It localises to the cellular thylakoid membrane. It catalyses the reaction a plastoquinone + NADH + (n+1) H(+)(in) = a plastoquinol + NAD(+) + n H(+)(out). The enzyme catalyses a plastoquinone + NADPH + (n+1) H(+)(in) = a plastoquinol + NADP(+) + n H(+)(out). NDH-1 shuttles electrons from an unknown electron donor, via FMN and iron-sulfur (Fe-S) centers, to quinones in the respiratory and/or the photosynthetic chain. The immediate electron acceptor for the enzyme in this species is believed to be plastoquinone. Couples the redox reaction to proton translocation, and thus conserves the redox energy in a proton gradient. Cyanobacterial NDH-1 also plays a role in inorganic carbon-concentration. This chain is NAD(P)H-quinone oxidoreductase subunit K, found in Picosynechococcus sp. (strain ATCC 27264 / PCC 7002 / PR-6) (Agmenellum quadruplicatum).